Consider the following 329-residue polypeptide: Phenylalanine--tRNA ligase alpha subunit (329 aa).

Position 254 (Glu254) interacts with Mg(2+).

This sequence belongs to the class-II aminoacyl-tRNA synthetase family. Phe-tRNA synthetase alpha subunit type 1 subfamily. As to quaternary structure, tetramer of two alpha and two beta subunits. The cofactor is Mg(2+).

It is found in the cytoplasm. It catalyses the reaction tRNA(Phe) + L-phenylalanine + ATP = L-phenylalanyl-tRNA(Phe) + AMP + diphosphate + H(+). This is Phenylalanine--tRNA ligase alpha subunit from Histophilus somni (strain 129Pt) (Haemophilus somnus).